A 106-amino-acid chain; its full sequence is Trp operon repressor homolog (106 aa).

The DNA-binding element occupies 59 to 82; it reads QREIQQILNTSAATITRGSNMIKI.

The protein belongs to the TrpR family. As to quaternary structure, homodimer.

The protein localises to the cytoplasm. Functionally, this protein is an aporepressor. When complexed with L-tryptophan it binds the operator region of the trp operon and prevents the initiation of transcription. The protein is Trp operon repressor homolog of Histophilus somni (strain 2336) (Haemophilus somnus).